We begin with the raw amino-acid sequence, 918 residues long: Interleukin-6 receptor subunit beta (918 aa).

Residues 1–22 (MSALRIWLMQALLIFLTTESIG) form the signal peptide. The Extracellular segment spans residues 23-618 (QLVEPCGYIY…TLKFAQGEIE (596 aa)). In terms of domain architecture, Ig-like C2-type spans 26–120 (EPCGYIYPEF…IEQNVYGITI (95 aa)). 2 cysteine pairs are disulfide-bonded: C28–C54 and C48–C103. Residues N43, N61, N83, and N131 are each glycosylated (N-linked (GlcNAc...) asparagine). Fibronectin type-III domains lie at 125 to 215 (PPDI…NFDP), 223 to 323 (PPHN…TYED), 328 to 418 (APSF…IPGS), 422 to 516 (ASHP…LKQA), and 518 to 612 (PSKG…TLKF). A disulfide bridge links C134 with C144. An N-linked (GlcNAc...) asparagine glycan is attached at N157. The cysteines at positions 172 and 181 are disulfide-linked. 2 N-linked (GlcNAc...) asparagine glycosylation sites follow: N205 and N226. Residues 309–313 (WSDWS) carry the WSXWS motif motif. N-linked (GlcNAc...) asparagine glycans are attached at residues N382 and N389. C457 and C465 are disulfide-bonded. N-linked (GlcNAc...) asparagine glycosylation is found at N477 and N552. The chain crosses the membrane as a helical span at residues 619–640 (AIVVPVCLAFLLTTLLGVLFCF). At 641–918 (NKRDLIKKHI…TVRQGGYMPQ (278 aa)) the chain is on the cytoplasmic side. A Box 1 motif motif is present at residues 650-658 (IWPNVPDPS). 4 disordered regions span residues 659–679 (KSHI…NSKD), 720–754 (TEGH…STAS), 773–795 (VQVF…PEDL), and 817–842 (SCSQ…GSEE). S660 and S666 each carry phosphoserine. Residues 730–751 (SSCMSSSRPSISSSEENESAQS) show a composition bias toward low complexity. Over residues 773–785 (VQVFSRSESTQPL) the composition is skewed to polar residues. 4 positions are modified to phosphoserine: S781, S788, S828, and S838.

The protein belongs to the type I cytokine receptor family. Type 2 subfamily. Component of a hexamer of two molecules each of IL6, IL6R and IL6ST; associates with the complex IL6:IL6R but does not interact with IL6. Forms heterodimers composed of LIFR and IL6ST (type I OSM receptor) which are activated by LIF and OSM. Also forms heterodimers composed of OSMR and IL6ST (type II receptor) which are activated by OSM but not by LIF. Interacts with HCK. Interacts with INPP5D/SHIP1. Interacts with SRC and YES. Interacts with ARMH4; this interaction prevents IL6ST protein homodimerization and bridges ARMH4 with IL6R and STAT3 and therefore inhibits phosphorylation of STAT3 at 'Tyr-705'. Post-translationally, phosphorylation of Ser-781 down-regulates cell surface expression. Heavily N-glycosylated. Glycosylation is required for protein stability and localization in plasma membrane but not for ligand binding. Found in hepatocytes, astrocytes, fibroblasts and endothelial cells.

It is found in the cell membrane. Functionally, signal-transducing molecule. The receptor systems for IL6, LIF, OSM, CNTF, IL11, CTF1 and BSF3 can utilize IL6ST for initiating signal transmission. Binding of IL6 to IL6R induces IL6ST homodimerization and formation of a high-affinity receptor complex, which activates the intracellular JAK-MAPK and JAK-STAT3 signaling pathways. That causes phosphorylation of IL6ST tyrosine residues which in turn activates STAT3. In parallel, the IL6 signaling pathway induces the expression of two cytokine receptor signaling inhibitors, SOCS1 and SOCS3, which inhibit JAK and terminate the activity of the IL6 signaling pathway as a negative feedback loop. Also activates the yes-associated protein 1 (YAP) and NOTCH pathways to control inflammation-induced epithelial regeneration, independently of STAT3. Mediates signals which regulate immune response, hematopoiesis, pain control and bone metabolism. Has a role in embryonic development. Essential for survival of motor and sensory neurons and for differentiation of astrocytes. Required for expression of TRPA1 in nociceptive neurons. Required for the maintenance of PTH1R expression in the osteoblast lineage and for the stimulation of PTH-induced osteoblast differentiation. Required for normal trabecular bone mass and cortical bone composition. The protein is Interleukin-6 receptor subunit beta of Rattus norvegicus (Rat).